Here is a 140-residue protein sequence, read N- to C-terminus: Large ribosomal subunit protein uL13 (140 aa).

It belongs to the universal ribosomal protein uL13 family. As to quaternary structure, part of the 50S ribosomal subunit.

In terms of biological role, this protein is one of the early assembly proteins of the 50S ribosomal subunit, although it is not seen to bind rRNA by itself. It is important during the early stages of 50S assembly. The protein is Large ribosomal subunit protein uL13 of Methanosarcina mazei (strain ATCC BAA-159 / DSM 3647 / Goe1 / Go1 / JCM 11833 / OCM 88) (Methanosarcina frisia).